The chain runs to 493 residues: Extracellular tyrosine-protein kinase PKDCC (493 aa).

A signal peptide spans 1–32 (MRRRRAAVAAGFCASFLLGSVLNVLFAPGSEP). The tract at residues 28-128 (PGSEPPRPGQ…PGPGSPGPGP (101 aa)) is disordered. Positions 30 to 46 (SEPPRPGQSPEPSPAPG) are enriched in pro residues. Positions 52-69 (GRGELARQIRARYEEVQR) are enriched in basic and acidic residues. 2 stretches are compositionally biased toward pro residues: residues 95 to 105 (PGLPRPRPPWA) and 114 to 127 (GWPPAPGPGSPGPG). N137 carries an N-linked (GlcNAc...) asparagine glycan. One can recognise a Protein kinase domain in the interval 138–493 (VSGAQYMGSG…NKTTYVKASG (356 aa)). ATP is bound by residues 144 to 152 (MGSGYTKAV) and K166. Position 148 is a phosphotyrosine (Y148). At S177 the chain carries Phosphoserine. D278 acts as the Proton acceptor in catalysis. Residues N320, N369, N400, N460, and N484 are each glycosylated (N-linked (GlcNAc...) asparagine).

It belongs to the protein kinase superfamily. N-glycosylated. In terms of processing, phosphorylated on tyrosines; probably via autophosphorylation. In terms of tissue distribution, highly expressed in platelets.

The protein localises to the secreted. It is found in the golgi apparatus. It catalyses the reaction L-tyrosyl-[protein] + ATP = O-phospho-L-tyrosyl-[protein] + ADP + H(+). Functionally, secreted tyrosine-protein kinase that mediates phosphorylation of extracellular proteins and endogenous proteins in the secretory pathway, which is essential for patterning at organogenesis stages. Mediates phosphorylation of MMP1, MMP13, MMP14, MMP19 and ERP29. Probably plays a role in platelets: rapidly and quantitatively secreted from platelets in response to stimulation of platelet degranulation. May also have serine/threonine protein kinase activity. Required for longitudinal bone growth through regulation of chondrocyte differentiation. May be indirectly involved in protein transport from the Golgi apparatus to the plasma membrane. This Homo sapiens (Human) protein is Extracellular tyrosine-protein kinase PKDCC.